The chain runs to 708 residues: Polyribonucleotide nucleotidyltransferase (708 aa).

The Mg(2+) site is built by aspartate 487 and aspartate 493. Positions 554 to 613 constitute a KH domain; that stretch reads PRIHTMKISADKIKDVIGKGGAVIRALTEETGTTIEIEDDGTIKIAATEGAAAKEAIRRI. The S1 motif domain maps to 623-691; the sequence is GVIYTGKVAR…RQGRVRLSMK (69 aa).

Belongs to the polyribonucleotide nucleotidyltransferase family. Component of the RNA degradosome, which is a multiprotein complex involved in RNA processing and mRNA degradation. Requires Mg(2+) as cofactor.

Its subcellular location is the cytoplasm. It catalyses the reaction RNA(n+1) + phosphate = RNA(n) + a ribonucleoside 5'-diphosphate. In terms of biological role, involved in mRNA degradation. Catalyzes the phosphorolysis of single-stranded polyribonucleotides processively in the 3'- to 5'-direction. The polypeptide is Polyribonucleotide nucleotidyltransferase (Vibrio vulnificus (strain CMCP6)).